Reading from the N-terminus, the 163-residue chain is Ribosome maturation factor RimP (163 aa).

This sequence belongs to the RimP family.

It localises to the cytoplasm. Functionally, required for maturation of 30S ribosomal subunits. The protein is Ribosome maturation factor RimP of Streptococcus mutans serotype c (strain ATCC 700610 / UA159).